We begin with the raw amino-acid sequence, 206 residues long: Small ribosomal subunit protein uS4 (206 aa).

An S4 RNA-binding domain is found at 98–155 (TRLDNVVYRLGWALSRDQARQLVSHGKIAVNGKRVNIPSYNLKPGDVVELLDKDLIPV).

The protein belongs to the universal ribosomal protein uS4 family. In terms of assembly, part of the 30S ribosomal subunit. Contacts protein S5. The interaction surface between S4 and S5 is involved in control of translational fidelity.

One of the primary rRNA binding proteins, it binds directly to 16S rRNA where it nucleates assembly of the body of the 30S subunit. Its function is as follows. With S5 and S12 plays an important role in translational accuracy. The protein is Small ribosomal subunit protein uS4 of Dictyoglomus thermophilum (strain ATCC 35947 / DSM 3960 / H-6-12).